A 257-amino-acid polypeptide reads, in one-letter code: Tryptophan synthase alpha chain (257 aa).

Residues glutamate 46 and aspartate 57 each act as proton acceptor in the active site.

It belongs to the TrpA family. As to quaternary structure, tetramer of two alpha and two beta chains.

It catalyses the reaction (1S,2R)-1-C-(indol-3-yl)glycerol 3-phosphate + L-serine = D-glyceraldehyde 3-phosphate + L-tryptophan + H2O. Its pathway is amino-acid biosynthesis; L-tryptophan biosynthesis; L-tryptophan from chorismate: step 5/5. Its function is as follows. The alpha subunit is responsible for the aldol cleavage of indoleglycerol phosphate to indole and glyceraldehyde 3-phosphate. The polypeptide is Tryptophan synthase alpha chain (Parabacteroides distasonis (strain ATCC 8503 / DSM 20701 / CIP 104284 / JCM 5825 / NCTC 11152)).